The sequence spans 383 residues: Cobalt-precorrin-5B C(1)-methyltransferase (383 aa).

Belongs to the CbiD family.

The catalysed reaction is Co-precorrin-5B + S-adenosyl-L-methionine = Co-precorrin-6A + S-adenosyl-L-homocysteine. The protein operates within cofactor biosynthesis; adenosylcobalamin biosynthesis; cob(II)yrinate a,c-diamide from sirohydrochlorin (anaerobic route): step 6/10. In terms of biological role, catalyzes the methylation of C-1 in cobalt-precorrin-5B to form cobalt-precorrin-6A. This is Cobalt-precorrin-5B C(1)-methyltransferase from Prochlorococcus marinus (strain MIT 9313).